We begin with the raw amino-acid sequence, 79 residues long: MVTIRLARGGSKKRPFYHLTVTDSRNSRDGRFIERVGFFNPIARGQEERLRVNRERVDFWLGQGAQASERVAQLLKAAQ.

It belongs to the bacterial ribosomal protein bS16 family.

The protein is Small ribosomal subunit protein bS16 of Marinobacter nauticus (strain ATCC 700491 / DSM 11845 / VT8) (Marinobacter aquaeolei).